We begin with the raw amino-acid sequence, 179 residues long: MINHNEWLIVGLITSPQGINGKIKIKSLSDFEERFTKPGKRWIQKGNETPIEFELTHGFKKPGKESFIITFKGINNRTQAENLKGQKILVKVDAIPKLSHGEYHLTELINLNVKISENNQLHIIGKVINLSNEKNNLLVIQLLKNNKEVLIPFVKEIVPIVDIKKNFILLTPPSGLLEL.

The 77-residue stretch at 100-176 (HGEYHLTELI…FILLTPPSGL (77 aa)) folds into the PRC barrel domain.

Belongs to the RimM family. As to quaternary structure, binds ribosomal protein uS19.

The protein resides in the cytoplasm. In terms of biological role, an accessory protein needed during the final step in the assembly of 30S ribosomal subunit, possibly for assembly of the head region. Essential for efficient processing of 16S rRNA. May be needed both before and after RbfA during the maturation of 16S rRNA. It has affinity for free ribosomal 30S subunits but not for 70S ribosomes. The protein is Ribosome maturation factor RimM of Prochlorococcus marinus subsp. pastoris (strain CCMP1986 / NIES-2087 / MED4).